The chain runs to 534 residues: CTP synthase (534 aa).

Residues 1–267 form an amidoligase domain region; it reads MTKYIFVTGG…DQIVCDHLKL (267 aa). Residue Ser13 coordinates CTP. A UTP-binding site is contributed by Ser13. 14–19 serves as a coordination point for ATP; sequence SIGKGI. Tyr54 is an L-glutamine binding site. Asp71 contributes to the ATP binding site. Residues Asp71 and Glu141 each coordinate Mg(2+). Residues 148–150, 188–193, and Lys224 each bind CTP; these read DIE and KTKPTQ. Residues 188–193 and Lys224 each bind UTP; that span reads KTKPTQ. Residue 240–242 participates in ATP binding; the sequence is RNV. The Glutamine amidotransferase type-1 domain occupies 292-534; that stretch reads KIALVGKYVE…FVTAAIKNSN (243 aa). Gly354 is a binding site for L-glutamine. Cys381 functions as the Nucleophile; for glutamine hydrolysis in the catalytic mechanism. Residues 382 to 385, Glu405, and Arg463 each bind L-glutamine; that span reads LGMQ. Catalysis depends on residues His508 and Glu510.

Belongs to the CTP synthase family. In terms of assembly, homotetramer.

The enzyme catalyses UTP + L-glutamine + ATP + H2O = CTP + L-glutamate + ADP + phosphate + 2 H(+). It catalyses the reaction L-glutamine + H2O = L-glutamate + NH4(+). The catalysed reaction is UTP + NH4(+) + ATP = CTP + ADP + phosphate + 2 H(+). It participates in pyrimidine metabolism; CTP biosynthesis via de novo pathway; CTP from UDP: step 2/2. With respect to regulation, allosterically activated by GTP, when glutamine is the substrate; GTP has no effect on the reaction when ammonia is the substrate. The allosteric effector GTP functions by stabilizing the protein conformation that binds the tetrahedral intermediate(s) formed during glutamine hydrolysis. Inhibited by the product CTP, via allosteric rather than competitive inhibition. Its function is as follows. Catalyzes the ATP-dependent amination of UTP to CTP with either L-glutamine or ammonia as the source of nitrogen. Regulates intracellular CTP levels through interactions with the four ribonucleotide triphosphates. The sequence is that of CTP synthase from Streptococcus pyogenes serotype M28 (strain MGAS6180).